We begin with the raw amino-acid sequence, 842 residues long: Elongation factor 2 (842 aa).

The tr-type G domain occupies 17-346; the sequence is TNVRNMSVIA…MIVLHLPSPV (330 aa). GTP-binding positions include 26-33, 158-161, and 213-215; these read AHVDHGKS, NKVD, and SGL. Position 699 is a diphthamide (His-699).

This sequence belongs to the TRAFAC class translation factor GTPase superfamily. Classic translation factor GTPase family. EF-G/EF-2 subfamily.

The protein localises to the cytoplasm. It catalyses the reaction GTP + H2O = GDP + phosphate + H(+). Functionally, catalyzes the GTP-dependent ribosomal translocation step during translation elongation. During this step, the ribosome changes from the pre-translocational (PRE) to the post-translocational (POST) state as the newly formed A-site-bound peptidyl-tRNA and P-site-bound deacylated tRNA move to the P and E sites, respectively. Catalyzes the coordinated movement of the two tRNA molecules, the mRNA and conformational changes in the ribosome. In Candida albicans (strain SC5314 / ATCC MYA-2876) (Yeast), this protein is Elongation factor 2 (EFT2).